We begin with the raw amino-acid sequence, 324 residues long: Alkanal monooxygenase beta chain (324 aa).

It belongs to the bacterial luciferase oxidoreductase family. Heterodimer of an alpha and a beta chain.

It catalyses the reaction a long-chain fatty aldehyde + FMNH2 + O2 = a long-chain fatty acid + hnu + FMN + H2O + 2 H(+). In terms of biological role, light-emitting reaction in luminous bacteria. The specific role of the beta subunit is unknown, but it is absolutely required for bioluminescence activity. The chain is Alkanal monooxygenase beta chain (luxB) from Vibrio harveyi (Beneckea harveyi).